Here is a 127-residue protein sequence, read N- to C-terminus: Gamma-synuclein (127 aa).

Repeat copies occupy residues 20 to 30 (EKTKQGVTEAA) and 31 to 41 (EKTKEGVMYVG). The tract at residues 20–67 (EKTKQGVTEAAEKTKEGVMYVGTKTKENVVHSVTSVAEKTKEQANAVS) is 4 X 11 AA tandem repeats of [EGSA]-K-T-K-[EQ]-[GQ]-V-X(4). A 3; approximate repeat occupies 42 to 56 (TKTKENVVHSVTSVA). The stretch at 57-67 (EKTKEQANAVS) is repeat 4. Residues Ser-67 and Ser-72 each carry the phosphoserine modification. The interval 97 to 127 (KEDLKPSAPQQEGEAAKEKEEVAEEAQSGGD) is disordered. Ser-124 carries the post-translational modification Phosphoserine; by BARK1, CaMK2 and CK2.

The protein belongs to the synuclein family. May be a centrosome-associated protein. Interacts with MYOC; affects its secretion and its aggregation. Phosphorylated. Phosphorylation by GRK5 appears to occur on residues distinct from the residue phosphorylated by other kinases.

Its subcellular location is the cytoplasm. The protein resides in the perinuclear region. It localises to the cytoskeleton. It is found in the microtubule organizing center. The protein localises to the centrosome. Its subcellular location is the spindle. Its function is as follows. Plays a role in neurofilament network integrity. May be involved in modulating axonal architecture during development and in the adult. In vitro, increases the susceptibility of neurofilament-H to calcium-dependent proteases. May also function in modulating the keratin network in skin. Activates the MAPK and Elk-1 signal transduction pathway. In Macaca fascicularis (Crab-eating macaque), this protein is Gamma-synuclein (SNCG).